A 641-amino-acid polypeptide reads, in one-letter code: Choline O-acetyltransferase (641 aa).

Ser-17 bears the Phosphoserine mark. Residue His-335 is the Proton acceptor of the active site. Ser-366 is subject to Phosphoserine. CoA contacts are provided by residues 413 to 425, Ser-451, and Gln-552; that span reads GKTF…CSPD. A disordered region spans residues 615 to 641; that stretch reads CSSRQPADSKPPTAKERARGPSQAKQS.

Belongs to the carnitine/choline acetyltransferase family.

The enzyme catalyses choline + acetyl-CoA = acetylcholine + CoA. Its function is as follows. Catalyzes the reversible synthesis of acetylcholine (ACh) from acetyl CoA and choline at cholinergic synapses. The polypeptide is Choline O-acetyltransferase (Chat) (Mus musculus (Mouse)).